The chain runs to 306 residues: Serrate RNA effector molecule homolog (306 aa).

A disordered region spans residues 1–28 (HKEEELLGSSGGPPPEEPPKEGNPAEIN). Thr-101 bears the Phosphothreonine mark. Residue Ser-109 is modified to Phosphoserine. The disordered stretch occupies residues 251 to 284 (GPPYPHGPYGAGRGNYDAFRGQGGYPGKPRNRMV). An omega-N-methylarginine mark is found at Arg-263, Arg-270, and Arg-280.

This sequence belongs to the ARS2 family. Interacts with CASP8AP2, ERBB4, NCBP1/CBP80 and DROSHA. Interacts with LUZP4. Interacts with NCBP2/CBP20 and NCBP3.

The protein resides in the nucleus. Its subcellular location is the nucleoplasm. It is found in the cytoplasm. Functionally, acts as a mediator between the cap-binding complex (CBC) and the primary microRNAs (miRNAs) processing machinery during cell proliferation. Contributes to the stability and delivery of capped primary miRNA transcripts to the primary miRNA processing complex containing DGCR8 and DROSHA, thereby playing a role in RNA-mediated gene silencing (RNAi) by miRNAs. Binds capped RNAs (m7GpppG-capped RNA); however interaction is probably mediated via its interaction with NCBP1/CBP80 component of the CBC complex. Involved in cell cycle progression at S phase. Does not directly confer arsenite resistance but rather modulates arsenic sensitivity. Independently of its activity on miRNAs, necessary and sufficient to promote neural stem cell self-renewal. Does so by directly binding SOX2 promoter and positively regulating its transcription. This chain is Serrate RNA effector molecule homolog (SRRT), found in Cricetulus griseus (Chinese hamster).